Reading from the N-terminus, the 236-residue chain is 2-C-methyl-D-erythritol 4-phosphate cytidylyltransferase (236 aa).

This sequence belongs to the IspD/TarI cytidylyltransferase family. IspD subfamily.

The catalysed reaction is 2-C-methyl-D-erythritol 4-phosphate + CTP + H(+) = 4-CDP-2-C-methyl-D-erythritol + diphosphate. It functions in the pathway isoprenoid biosynthesis; isopentenyl diphosphate biosynthesis via DXP pathway; isopentenyl diphosphate from 1-deoxy-D-xylulose 5-phosphate: step 2/6. Catalyzes the formation of 4-diphosphocytidyl-2-C-methyl-D-erythritol from CTP and 2-C-methyl-D-erythritol 4-phosphate (MEP). This is 2-C-methyl-D-erythritol 4-phosphate cytidylyltransferase from Symbiobacterium thermophilum (strain DSM 24528 / JCM 14929 / IAM 14863 / T).